Here is a 639-residue protein sequence, read N- to C-terminus: Chaperone protein DnaK (639 aa).

A Phosphothreonine; by autocatalysis modification is found at Thr198. The tract at residues 602–639 (QAKSQAQGGDNADAGKQANATADDVVDAEFEEVKDDKK) is disordered. Positions 625–639 (DVVDAEFEEVKDDKK) are enriched in acidic residues.

The protein belongs to the heat shock protein 70 family.

Its function is as follows. Acts as a chaperone. This chain is Chaperone protein DnaK, found in Shewanella baltica (strain OS195).